Here is a 451-residue protein sequence, read N- to C-terminus: Tubulin gamma-2 chain (451 aa).

Ser-131 bears the Phosphoserine; by BRSK1 mark. 142-148 (AGGTGSG) contacts GTP.

It belongs to the tubulin family. In terms of assembly, component of the gamma-tubulin ring complex (gTuRC) consisting of TUBGCP2, TUBGCP3, TUBGCP4, TUBGCP5 and TUBGCP6 and gamma-tubulin TUBG1 or TUBG2. TUBGCP2, TUBGCP3, TUBGCP4, TUBGCP5 and TUBGCP6 assemble in a 5:5:2:1:1 stoichiometry; each is associated with a gamma-tubulin, thereby arranging 14 gamma-tubulins in a helical manner. Gamma-tubulin at the first position is blocked by TUBGCP3 at the last position, allowing 13 protafilaments to grow into a microtubule. Interacts with alpha-beta tubulin heterodimers; the interaction allows microtubules to nucleate from the gTuRC. Phosphorylation at Ser-131 by BRSK1 regulates centrosome duplication, possibly by mediating relocation of gamma-tubulin and its associated proteins from the cytoplasm to the centrosome.

It localises to the cytoplasm. The protein localises to the cytoskeleton. It is found in the microtubule organizing center. Its subcellular location is the centrosome. Tubulin is the major constituent of microtubules, protein filaments consisting of alpha- and beta-tubulin heterodimers. Gamma-tubulin is a key component of the gamma-tubulin ring complex (gTuRC) which mediates microtubule nucleation. The gTuRC regulates the minus-end nucleation of alpha-beta tubulin heterodimers that grow into microtubule protafilaments, a critical step in centrosome duplication and spindle formation. This is Tubulin gamma-2 chain (TUBG2) from Homo sapiens (Human).